Here is a 430-residue protein sequence, read N- to C-terminus: Probable histidine--tRNA ligase, cytoplasmic (430 aa).

It belongs to the class-II aminoacyl-tRNA synthetase family.

Its subcellular location is the cytoplasm. The catalysed reaction is tRNA(His) + L-histidine + ATP = L-histidyl-tRNA(His) + AMP + diphosphate + H(+). This Vairimorpha ceranae (strain BRL01) (Microsporidian parasite) protein is Probable histidine--tRNA ligase, cytoplasmic.